Consider the following 287-residue polypeptide: PIH1 domain-containing protein 1 (287 aa).

It belongs to the PIH1 family.

It is found in the nucleus. In terms of biological role, involved in the assembly of C/D box small nucleolar ribonucleoprotein (snoRNP) particles. Recruits the SWI/SNF complex to the core promoter of rRNA genes and enhances pre-rRNA transcription. Mediates interaction of TELO2 with the R2TP complex which is necessary for the stability of MTOR and SMG1. Positively regulates the assembly and activity of the mTORC1 complex. This is PIH1 domain-containing protein 1 (pih1d1) from Danio rerio (Zebrafish).